Here is a 431-residue protein sequence, read N- to C-terminus: Serine--tRNA ligase (431 aa).

237 to 239 (TAE) lines the L-serine pocket. 268–270 (RSE) is a binding site for ATP. Glu291 contacts L-serine. 355–358 (EISS) lines the ATP pocket. Ser390 is a binding site for L-serine.

The protein belongs to the class-II aminoacyl-tRNA synthetase family. Type-1 seryl-tRNA synthetase subfamily. In terms of assembly, homodimer. The tRNA molecule binds across the dimer.

The protein localises to the cytoplasm. The catalysed reaction is tRNA(Ser) + L-serine + ATP = L-seryl-tRNA(Ser) + AMP + diphosphate + H(+). The enzyme catalyses tRNA(Sec) + L-serine + ATP = L-seryl-tRNA(Sec) + AMP + diphosphate + H(+). It participates in aminoacyl-tRNA biosynthesis; selenocysteinyl-tRNA(Sec) biosynthesis; L-seryl-tRNA(Sec) from L-serine and tRNA(Sec): step 1/1. In terms of biological role, catalyzes the attachment of serine to tRNA(Ser). Is also able to aminoacylate tRNA(Sec) with serine, to form the misacylated tRNA L-seryl-tRNA(Sec), which will be further converted into selenocysteinyl-tRNA(Sec). This chain is Serine--tRNA ligase, found in Neisseria meningitidis serogroup A / serotype 4A (strain DSM 15465 / Z2491).